The chain runs to 329 residues: Probable cell division protein WhiA (329 aa).

Residues 276-309 (SLEELGKVHEPPLTKDAIAGRIRRLLALADKTAR) constitute a DNA-binding region (H-T-H motif). Residues 308-329 (ARSNGEPTTLESLPVEMRDDRG) form a disordered region. Over residues 309–318 (RSNGEPTTLE) the composition is skewed to polar residues.

Belongs to the WhiA family.

In terms of biological role, involved in cell division and chromosome segregation. The sequence is that of Probable cell division protein WhiA from Cutibacterium acnes (strain DSM 16379 / KPA171202) (Propionibacterium acnes).